We begin with the raw amino-acid sequence, 376 residues long: Cinnamyl alcohol dehydrogenase 2 (376 aa).

Cys44 contacts Zn(2+). NADP(+) is bound at residue Ser46. Zn(2+) contacts are provided by His66, Glu67, Cys97, Cys100, Cys103, Cys111, and Cys161. Residues Thr165, 187-192 (GLGGLG), 210-215 (SRSSEK), Thr250, Gly274, and 297-299 (SQI) contribute to the NADP(+) site.

The protein belongs to the zinc-containing alcohol dehydrogenase family. As to quaternary structure, homodimer. Zn(2+) serves as cofactor. Expressed at the base of the stems.

The enzyme catalyses (E)-cinnamyl alcohol + NADP(+) = (E)-cinnamaldehyde + NADPH + H(+). The catalysed reaction is (E)-coniferol + NADP(+) = (E)-coniferaldehyde + NADPH + H(+). It catalyses the reaction (E)-sinapyl alcohol + NADP(+) = (E)-sinapaldehyde + NADPH + H(+). It carries out the reaction (E)-4-coumaroyl alcohol + NADP(+) = (E)-4-coumaraldehyde + NADPH + H(+). The enzyme catalyses (E)-caffeyl alcohol + NADP(+) = (E)-caffeyl aldehyde + NADPH + H(+). Its pathway is aromatic compound metabolism; phenylpropanoid biosynthesis. Functionally, involved in lignin biosynthesis. Catalyzes the final step specific for the production of lignin monomers. Catalyzes the NADPH-dependent reduction of coniferaldehyde, 5-hydroxyconiferaldehyde, sinapaldehyde, 4-coumaraldehyde and caffeyl aldehyde to their respective alcohols. The sequence is that of Cinnamyl alcohol dehydrogenase 2 from Arabidopsis thaliana (Mouse-ear cress).